Consider the following 500-residue polypeptide: Tektin-like protein 1 (500 aa).

The stretch at 198-229 (MLTWEKEELKSMKRKMEADMEKSEALLKTLAS) forms a coiled coil. Tyrosine 372 carries the post-translational modification Phosphotyrosine. Residues 420 to 444 (DKLQRHISHVEKNLDELLSMRKKLT) adopt a coiled-coil conformation.

In terms of assembly, microtubule inner protein component of sperm flagellar doublet microtubules.

It is found in the cytoplasm. It localises to the cytoskeleton. The protein localises to the flagellum axoneme. Microtubule inner protein (MIP) part of the dynein-decorated doublet microtubules (DMTs) in sperm flagellar axoneme, which is required for motile flagellum beating. Forms an extensive interaction network cross-linking the lumen of axonemal doublet microtubules. The chain is Tektin-like protein 1 from Bos taurus (Bovine).